The sequence spans 213 residues: ATP-dependent Clp protease proteolytic subunit (213 aa).

S114 (nucleophile) is an active-site residue. Residue H139 is part of the active site.

It belongs to the peptidase S14 family. Fourteen ClpP subunits assemble into 2 heptameric rings which stack back to back to give a disk-like structure with a central cavity, resembling the structure of eukaryotic proteasomes.

Its subcellular location is the cytoplasm. It carries out the reaction Hydrolysis of proteins to small peptides in the presence of ATP and magnesium. alpha-casein is the usual test substrate. In the absence of ATP, only oligopeptides shorter than five residues are hydrolyzed (such as succinyl-Leu-Tyr-|-NHMec, and Leu-Tyr-Leu-|-Tyr-Trp, in which cleavage of the -Tyr-|-Leu- and -Tyr-|-Trp bonds also occurs).. Functionally, cleaves peptides in various proteins in a process that requires ATP hydrolysis. Has a chymotrypsin-like activity. Plays a major role in the degradation of misfolded proteins. In Pseudomonas putida (strain ATCC 47054 / DSM 6125 / CFBP 8728 / NCIMB 11950 / KT2440), this protein is ATP-dependent Clp protease proteolytic subunit.